The sequence spans 177 residues: MNGGHIQLMIGPMFSGKSTELIRRVRRYQIAQYKCVTIKYSNDNRYGTGLWTHDKNNFEALEATKLCDVLESITDFSVIGIDEGQFFPDIVEFCERMANEGKIVIVAALDGTFQRKPFNNILNLIPLSEMVVKLTAVCMKCFKEASFSKRLGEETEIEIIGGNDMYQSVCRKCYIDS.

Position 11-18 (glycine 11–serine 18) interacts with ATP. Catalysis depends on glutamate 83, which acts as the Proton acceptor. Position 113 (phenylalanine 113) interacts with substrate. Zn(2+)-binding residues include cysteine 138 and cysteine 141. Isoleucine 157–glycine 161 is a binding site for substrate. Zn(2+)-binding residues include cysteine 170 and cysteine 173.

The protein belongs to the thymidine kinase family. As to quaternary structure, homotetramer. Two molecules of substrate bind to each enzyme tetramer.

The catalysed reaction is thymidine + ATP = dTMP + ADP + H(+). Phosphorylates thymidine and thymidine analogs, such as azidothymidine (AZT). Part of the salvage pathway for pyrimidine deoxyribonucleotide synthesis. This is Thymidine kinase (OPG101) from Vaccinia virus (strain Tian Tan) (VACV).